Consider the following 622-residue polypeptide: Kelch-like protein 14 (622 aa).

One can recognise a BTB domain in the interval 33-145 (CDVTLTAQGQ…LYTANVTLSL (113 aa)). A disordered region spans residues 73 to 108 (ALGPGAQDGLGGAPPKEPPPPPQEEPGTPSSSPEDK). Over residues 87-96 (PKEPPPPPQE) the composition is skewed to pro residues. Kelch repeat units follow at residues 317–366 (MLLL…EVEN), 367–418 (FLFV…RLDK), 419–465 (NLYV…VHNG), 467–512 (IYIS…VMND), 514–564 (LYAI…VLDD), and 566–614 (IYLV…TVIL).

It localises to the cytoplasm. It is found in the cytosol. The protein resides in the endoplasmic reticulum membrane. The protein is Kelch-like protein 14 (KLHL14) of Gallus gallus (Chicken).